The sequence spans 393 residues: Formate-dependent phosphoribosylglycinamide formyltransferase (393 aa).

N(1)-(5-phospho-beta-D-ribosyl)glycinamide-binding positions include 17 to 18 and E77; that span reads EL. Residues R109, K150, 155–160, 190–193, and E198 contribute to the ATP site; these read SSGKGQ and EEFL. In terms of domain architecture, ATP-grasp spans 114 to 304; that stretch reads DLAAGELGLR…EFELHLRAVL (191 aa). Positions 263 and 275 each coordinate Mg(2+). Residues D282, K354, and 361-362 contribute to the N(1)-(5-phospho-beta-D-ribosyl)glycinamide site; that span reads RR.

The protein belongs to the PurK/PurT family. Homodimer.

It carries out the reaction N(1)-(5-phospho-beta-D-ribosyl)glycinamide + formate + ATP = N(2)-formyl-N(1)-(5-phospho-beta-D-ribosyl)glycinamide + ADP + phosphate + H(+). It functions in the pathway purine metabolism; IMP biosynthesis via de novo pathway; N(2)-formyl-N(1)-(5-phospho-D-ribosyl)glycinamide from N(1)-(5-phospho-D-ribosyl)glycinamide (formate route): step 1/1. Functionally, involved in the de novo purine biosynthesis. Catalyzes the transfer of formate to 5-phospho-ribosyl-glycinamide (GAR), producing 5-phospho-ribosyl-N-formylglycinamide (FGAR). Formate is provided by PurU via hydrolysis of 10-formyl-tetrahydrofolate. The chain is Formate-dependent phosphoribosylglycinamide formyltransferase from Synechococcus sp. (strain RCC307).